The sequence spans 185 residues: Elongation factor P (185 aa).

This sequence belongs to the elongation factor P family.

It is found in the cytoplasm. It functions in the pathway protein biosynthesis; polypeptide chain elongation. Functionally, involved in peptide bond synthesis. Stimulates efficient translation and peptide-bond synthesis on native or reconstituted 70S ribosomes in vitro. Probably functions indirectly by altering the affinity of the ribosome for aminoacyl-tRNA, thus increasing their reactivity as acceptors for peptidyl transferase. The polypeptide is Elongation factor P (Bacillus anthracis (strain CDC 684 / NRRL 3495)).